A 230-amino-acid polypeptide reads, in one-letter code: Flagellar L-ring protein (230 aa).

A signal peptide spans 1-15; sequence MSRLPSLSRLCLAIA. Cys16 carries N-palmitoyl cysteine lipidation. The S-diacylglycerol cysteine moiety is linked to residue Cys16.

Belongs to the FlgH family. In terms of assembly, the basal body constitutes a major portion of the flagellar organelle and consists of four rings (L,P,S, and M) mounted on a central rod.

Its subcellular location is the cell outer membrane. It localises to the bacterial flagellum basal body. In terms of biological role, assembles around the rod to form the L-ring and probably protects the motor/basal body from shearing forces during rotation. The sequence is that of Flagellar L-ring protein from Xanthomonas euvesicatoria pv. vesicatoria (strain 85-10) (Xanthomonas campestris pv. vesicatoria).